The chain runs to 182 residues: Guanylate kinase (182 aa).

Residues 2–180 (GTLTVITGPS…ALLKLEGLMG (179 aa)) enclose the Guanylate kinase-like domain. An ATP-binding site is contributed by 9 to 16 (GPSGVGKG).

It belongs to the guanylate kinase family.

It is found in the cytoplasm. The enzyme catalyses GMP + ATP = GDP + ADP. It carries out the reaction dZMP + ATP = dZDP + ADP. It functions in the pathway purine metabolism. In terms of biological role, essential for recycling GMP and indirectly, cGMP. Its function is as follows. (Microbial infection) Catalyzes the phosphorylation of dZMP to dZDP, when the bacterium is infected by a phage that produces the substrate for the synthesis of dZTP (2- amino-2'-deoxyadenosine 5'-triphosphate), which is then used by the phage as a DNA polymerase substrate. The sequence is that of Guanylate kinase from Parasynechococcus marenigrum (strain WH8102).